A 151-amino-acid chain; its full sequence is Spore coat polysaccharide biosynthesis protein SpsL (151 aa).

The protein to dTDP-4-dehydrorhamnose reductase.

The protein operates within spore coat biogenesis; spore coat polysaccharide biosynthesis. This is Spore coat polysaccharide biosynthesis protein SpsL (spsL) from Bacillus subtilis (strain 168).